Here is a 7388-residue protein sequence, read N- to C-terminus: Microtubule-actin cross-linking factor 1, isoforms 1/2/3/4/5 (7388 aa).

The segment at 1–47 (MSSSDEETLSERSCRSERSCRSERSYRSERSGSLSPCPPGDTLPWNL) is disordered. Residues 1-295 (MSSSDEETLS…VITYVSSIYD (295 aa)) are actin-binding. Serine 4 bears the Phosphoserine mark. Over residues 9–30 (LSERSCRSERSCRSERSYRSER) the composition is skewed to basic and acidic residues. 2 positions are modified to phosphoserine: serine 35 and serine 57. 2 consecutive Calponin-homology (CH) domains span residues 78-181 (RVQK…LHFQ) and 194-298 (MSAK…DAFP). LRR repeat units follow at residues 148-171 (QRQV…LTLG) and 240-264 (LVDM…VAER). A Phosphoserine modification is found at serine 280. LRR repeat units follow at residues 377–399 (LYKL…YHPN) and 441–464 (LNCE…LESG). Position 814 is a phosphoserine (serine 814). One can recognise an SH3 domain in the interval 868-925 (KNTISVKAVCDYRQIEITICKNDECVLEDNSQRTKWKVISPTGNEAMVPSVCFLIPPP). The LRR 5 repeat unit spans residues 1050 to 1073 (ISELKNIRLRLEEYEQRVVKRIQS). Serine 1122 carries the post-translational modification Phosphoserine. LRR repeat units follow at residues 1128-1154 (VPTL…VYLN), 1187-1210 (LADL…VKDK), and 1257-1282 (HRVI…DYRA). 2 positions are modified to phosphoserine: serine 1367 and serine 1376. Plectin repeat units lie at residues 1577–1621 (LVLL…RELQ), 1654–1696 (LKIL…VLES), 1769–1809 (RLLE…CAIL), 1811–1848 (RQLQ…VILE), and 1855–1886 (GLLW…KILS). Residues serine 2006 and serine 2051 each carry the phosphoserine modification. The interval 2051–2085 (SQNKEYPDREDCTTEKGKKTTVETEDSSVENPEQD) is disordered. The segment covering 2055 to 2072 (EYPDREDCTTEKGKKTTV) has biased composition (basic and acidic residues). Residue serine 2077 is modified to Phosphoserine. Plectin repeat units follow at residues 2290–2332 (LNVL…KLME), 2367–2410 (NVLM…LERQ), 2411–2437 (VVTG…GLVD), 2501–2543 (RLLT…LKRV), 2581–2612 (EVQA…LTNE), and 2686–2730 (LKVL…ASHQ). Disordered regions lie at residues 3013–3034 (EHDS…GKEA) and 3104–3174 (SEPF…NECK). Residues 3115–3124 (EGLHYQESDG) show a composition bias toward basic and acidic residues. Serine 3122 is modified (phosphoserine). Polar residues predominate over residues 3129–3158 (TGPSQISKTDKSFQGTTRQETNYQDSWVTS). LRR repeat units lie at residues 3239–3262 (LTGE…SIED) and 3264–3283 (VTQR…LFKG). The segment covering 3321 to 3332 (EKTPQEKLRESP) has biased composition (basic and acidic residues). The segment at 3321–3350 (EKTPQEKLRESPGSEQTPFMTAPEGKGNGG) is disordered. Serine 3331 is subject to Phosphoserine. 2 LRR repeats span residues 3646–3669 (QQDL…IQNR) and 3696–3720 (LTAL…TRVA). Spectrin repeat units lie at residues 3883–3957 (ELQK…NSFK) and 4000–4108 (QYHQ…SLLQ). At serine 3927 the chain carries Phosphoserine. Residues 3936-3958 (KGDLRFVTISGQKVLDMENSFKE) form an LRR 13 repeat. LRR repeat units lie at residues 4125 to 4150 (LQSI…VIQE) and 4261 to 4287 (IQEL…ELSS). The Spectrin 3 repeat unit spans residues 4466–4574 (RMEEVHKEAN…TVARQRQLEE (109 aa)). Phosphoserine is present on residues serine 4495, serine 4496, and serine 4521. 3 LRR repeats span residues 4511-4534 (KAFL…LAGL), 4601-4624 (GVLG…QFML), and 4769-4792 (KKRL…RINR). Spectrin repeat units follow at residues 4800–4904 (TQQF…SRLK) and 4909–5012 (KAQK…SLEE). A phosphoserine mark is found at serine 4836 and serine 4962. 3 LRR repeats span residues 5051-5076 (NKNL…YLRN), 5172-5194 (NKIH…MLEE), and 5281-5304 (KEQV…LIQS). 3 Spectrin repeats span residues 5236–5341 (EDFY…QLQE), 5348–5450 (KFQD…QLED), and 5455–5557 (AKQF…LRTL). A Phosphothreonine modification is found at threonine 5435. Residues 5583–5603 (EELATSGGQSPTGEQIPQFQQ) form a disordered region. The segment covering 5588-5603 (SGGQSPTGEQIPQFQQ) has biased composition (polar residues). 2 LRR repeats span residues 5695–5719 (MALG…AFSI) and 5804–5828 (AQLP…QLRE). 9 Spectrin repeats span residues 5783 to 5885 (NQFW…ALDE), 6005 to 6110 (LAEK…KLED), 6115 to 6219 (AVQY…HKLE), 6225 to 6328 (LGQF…QQLQ), 6333 to 6439 (QAQG…KLEE), 6443 to 6547 (LATE…RSLD), 6552 to 6658 (RAKQ…KLEE), 6665 to 6766 (QFMD…RLEQ), and 6771 to 6874 (AEVF…QRLE). Phosphoserine occurs at positions 5808 and 6032. Lysine 6210 bears the N6-acetyllysine mark. The LRR 24 repeat unit spans residues 6496-6519 (RDQIIELDQTGNQLKFLSQKQDVV). The segment at 6951-6981 (PTHAPFIEKSRSGGRKSLSQPTPPPMPILSQ) is disordered. Serine 6967 is subject to Phosphoserine. EF-hand domains are found at residues 7041–7076 (HKKS…SKFP) and 7077–7112 (TTKL…NKDA). Residues aspartate 7054, aspartate 7056, aspartate 7058, lysine 7060, glutamate 7065, aspartate 7090, aspartate 7092, aspartate 7094, tyrosine 7096, and glutamate 7101 each contribute to the Ca(2+) site. Positions 7117 to 7189 (TDADKIEDEV…EFLVKNDPCR (73 aa)) constitute a GAR domain. The C-terminal tail stretch occupies residues 7117–7388 (TDADKIEDEV…ASPRTPGPKR (272 aa)). The tract at residues 7205–7388 (PEGASQGMTP…ASPRTPGPKR (184 aa)) is disordered. The span at 7225-7259 (SSRAASPTRSSSSASQSNHSCTSMPSSPATPASGT) shows a compositional bias: low complexity. The residue at position 7254 (threonine 7254) is a Phosphothreonine. The segment covering 7275-7299 (TFHSSRTSLAGDTSNSSSPASTGAK) has biased composition (polar residues). A phosphoserine mark is found at serine 7279 and serine 7292. Over residues 7310-7324 (SRPGSRAGSRAGSRA) the composition is skewed to low complexity. A 4 X 4 AA tandem repeats of [GS]-S-R-[AR] region spans residues 7313–7328 (GSRAGSRAGSRASSRR). Phosphoserine occurs at positions 7330 and 7333. The span at 7339–7361 (ETQSACSDTSESSAAGGQGNSRR) shows a compositional bias: polar residues.

It belongs to the plakin or cytolinker family. As to quaternary structure, isoform 2: Interacts with MAPRE1, CLASP1, CLASP2, AXIN1 and LRP6. Isoform 2: Found in a complex composed of MACF1, APC, AXIN1, CTNNB1 and GSK3B. Isoform 2: Interacts with GOLGA4. Isoform 2: Interacts with CAMSAP3. In terms of processing, phosphorylated on serine residues in the C-terminal tail by GSK3B. Phosphorylation inhibits microtubule-binding and this plays a critical role in bulge stem cell migration and skin wound repair. Wnt-signaling can repress phosphorylation. In terms of tissue distribution, isoform 2: Ubiquitously expressed. Isoform 1: Expressed in cell lines NCI-H460, A-549 and HaCaT. Isoform 4: Expressed in heart, lung, pituitary and placenta, not found in brain, kidney, liver, pancreas or skeletal muscle.

It localises to the cytoplasm. The protein localises to the cytoskeleton. It is found in the golgi apparatus. Its subcellular location is the cell membrane. The protein resides in the cell projection. It localises to the ruffle membrane. In terms of biological role, F-actin-binding protein which plays a role in cross-linking actin to other cytoskeletal proteins and also binds to microtubules. Plays an important role in ERBB2-dependent stabilization of microtubules at the cell cortex. Acts as a positive regulator of Wnt receptor signaling pathway and is involved in the translocation of AXIN1 and its associated complex (composed of APC, CTNNB1 and GSK3B) from the cytoplasm to the cell membrane. Has actin-regulated ATPase activity and is essential for controlling focal adhesions (FAs) assembly and dynamics. Interaction with CAMSAP3 at the minus ends of non-centrosomal microtubules tethers microtubules minus-ends to actin filaments, regulating focal adhesion size and cell migration. May play role in delivery of transport vesicles containing GPI-linked proteins from the trans-Golgi network through its interaction with GOLGA4. Plays a key role in wound healing and epidermal cell migration. Required for efficient upward migration of bulge cells in response to wounding and this function is primarily rooted in its ability to coordinate microtubule dynamics and polarize hair follicle stem cells. As a regulator of actin and microtubule arrangement and stabilization, it plays an essential role in neurite outgrowth, branching and spine formation during brain development. The protein is Microtubule-actin cross-linking factor 1, isoforms 1/2/3/4/5 of Homo sapiens (Human).